The primary structure comprises 296 residues: Elongation factor Ts (296 aa).

Residues 79 to 82 (TDFV) form an involved in Mg(2+) ion dislocation from EF-Tu region.

It belongs to the EF-Ts family.

It is found in the cytoplasm. In terms of biological role, associates with the EF-Tu.GDP complex and induces the exchange of GDP to GTP. It remains bound to the aminoacyl-tRNA.EF-Tu.GTP complex up to the GTP hydrolysis stage on the ribosome. This Acholeplasma laidlawii (strain PG-8A) protein is Elongation factor Ts.